Reading from the N-terminus, the 1690-residue chain is DNA-directed RNA polymerase subunit beta' (1690 aa).

Cys63, Cys65, Cys78, and Cys81 together coordinate Zn(2+). Mg(2+)-binding residues include Asp753, Asp755, and Asp757. 4 residues coordinate Zn(2+): Cys1107, Cys1295, Cys1302, and Cys1305.

Belongs to the RNA polymerase beta' chain family. In terms of assembly, the RNAP catalytic core consists of 2 alpha, 1 beta, 1 beta' and 1 omega subunit. When a sigma factor is associated with the core the holoenzyme is formed, which can initiate transcription. The cofactor is Mg(2+). It depends on Zn(2+) as a cofactor.

The catalysed reaction is RNA(n) + a ribonucleoside 5'-triphosphate = RNA(n+1) + diphosphate. DNA-dependent RNA polymerase catalyzes the transcription of DNA into RNA using the four ribonucleoside triphosphates as substrates. This Thermotoga sp. (strain RQ2) protein is DNA-directed RNA polymerase subunit beta'.